Here is a 999-residue protein sequence, read N- to C-terminus: Probable metabotropic glutamate receptor mgl-1 (999 aa).

Residues Ser-202, 223 to 225 (AST), Tyr-273, Glu-363, and Lys-455 each bind L-glutamate. N-linked (GlcNAc...) asparagine glycosylation is present at Asn-518. The next 7 helical transmembrane spans lie at 682-704 (SLVP…VVYV), 719-739 (LSYI…VLLS), 751-769 (TGIG…VKTN), 792-812 (VVMT…WLSV), 836-857 (HHFL…TYAV), 871-893 (FIGF…FFGT), and 904-929 (LCIS…IILF). Residues 975-999 (DSTRRRSSRKTSQPTSTSSAHDTFL) form a disordered region. Over residues 984–993 (KTSQPTSTSS) the composition is skewed to low complexity.

Belongs to the G-protein coupled receptor 3 family.

It localises to the cell membrane. Functionally, G-protein coupled receptor for glutamate. Ligand binding causes a conformation change that triggers signaling via guanine nucleotide-binding proteins (G proteins) and modulates the activity of down-stream effectors. The protein is Probable metabotropic glutamate receptor mgl-1 (mgl-1) of Caenorhabditis elegans.